The primary structure comprises 287 residues: ATP synthase gamma chain (287 aa).

Belongs to the ATPase gamma chain family. As to quaternary structure, F-type ATPases have 2 components, CF(1) - the catalytic core - and CF(0) - the membrane proton channel. CF(1) has five subunits: alpha(3), beta(3), gamma(1), delta(1), epsilon(1). CF(0) has three main subunits: a, b and c.

It localises to the cell inner membrane. Its function is as follows. Produces ATP from ADP in the presence of a proton gradient across the membrane. The gamma chain is believed to be important in regulating ATPase activity and the flow of protons through the CF(0) complex. The polypeptide is ATP synthase gamma chain (Salmonella paratyphi A (strain ATCC 9150 / SARB42)).